The chain runs to 757 residues: Neutral ceramidase 2 (757 aa).

The signal sequence occupies residues Met-1–Ala-25. Asn-311 is a glycosylation site (N-linked (GlcNAc...) asparagine). Ser-330 serves as the catalytic Nucleophile. Residues Asn-348 and Asn-657 are each glycosylated (N-linked (GlcNAc...) asparagine).

Belongs to the neutral ceramidase family.

The protein localises to the secreted. Its subcellular location is the endoplasmic reticulum. It is found in the golgi apparatus. It carries out the reaction an N-acylsphing-4-enine + H2O = sphing-4-enine + a fatty acid. Its function is as follows. Hydrolyzes the sphingolipid ceramide into sphingosine and free fatty acid. The polypeptide is Neutral ceramidase 2 (Arabidopsis thaliana (Mouse-ear cress)).